Here is a 377-residue protein sequence, read N- to C-terminus: Putative F-box protein At1g70380 (377 aa).

An F-box domain is found at 3-48 (NTSFETLALDMQIEILARLPLKYLMRCMCVSKKWASLIRGEDFRSA).

This chain is Putative F-box protein At1g70380, found in Arabidopsis thaliana (Mouse-ear cress).